We begin with the raw amino-acid sequence, 97 residues long: MKIIREAVAGTLESSDVMVRIAPLNPPEIDLQIHSSVDKQFGDAIRYSVLALLEQYRVTGVQLIIDDKGALDCVLQARLETALLRASDEKILPWRAH.

Ser14 carries the O-(phosphoribosyl dephospho-coenzyme A)serine modification.

The protein belongs to the CitD family. As to quaternary structure, oligomer with a subunit composition of (alpha,beta,gamma)6.

The protein localises to the cytoplasm. Covalent carrier of the coenzyme of citrate lyase. The chain is Citrate lyase acyl carrier protein from Yersinia enterocolitica serotype O:8 / biotype 1B (strain NCTC 13174 / 8081).